We begin with the raw amino-acid sequence, 257 residues long: Cytosolic Fe-S cluster assembly factor NUBP2 homolog (257 aa).

14–21 is a binding site for ATP; the sequence is GKGGVGKS. [4Fe-4S] cluster is bound by residues Cys188 and Cys191.

It belongs to the Mrp/NBP35 ATP-binding proteins family. NUBP2/CFD1 subfamily. In terms of assembly, heterotetramer of 2 NUBP1 and 2 NUBP2 chains. It depends on [4Fe-4S] cluster as a cofactor.

The protein resides in the cytoplasm. Functionally, component of the cytosolic iron-sulfur (Fe/S) protein assembly (CIA) machinery. Required for maturation of extramitochondrial Fe-S proteins. The NUBP1-NUBP2 heterotetramer forms a Fe-S scaffold complex, mediating the de novo assembly of an Fe-S cluster and its transfer to target apoproteins. In Culex quinquefasciatus (Southern house mosquito), this protein is Cytosolic Fe-S cluster assembly factor NUBP2 homolog.